The sequence spans 703 residues: Probable ATP-dependent RNA helicase DHX35 (703 aa).

Positions 64–229 constitute a Helicase ATP-binding domain; that stretch reads LYLIENYQTV…FNQNETSDPA (166 aa). Residue 77-84 coordinates ATP; sequence GETGCGKS. A DEAH box motif is present at residues 176–179; it reads DEAH. The region spanning 261 to 438 is the Helicase C-terminal domain; that stretch reads TVETVVKIHQ…PVILQLKALG (178 aa).

It belongs to the DEAD box helicase family. DEAH subfamily. In terms of assembly, identified in the spliceosome C complex.

The enzyme catalyses ATP + H2O = ADP + phosphate + H(+). Functionally, may be involved in pre-mRNA splicing. The polypeptide is Probable ATP-dependent RNA helicase DHX35 (DHX35) (Homo sapiens (Human)).